The chain runs to 418 residues: MTAHTNSPRILVIGTGDTKSDELLFMADVIERAGGSPVMIDVSILGNPPYEPAYSKHDVAEAAGTTVQAIIDSGDEHSAMALMAEGATALVRGLSQRGQVDGMIALGGSLGTDLALDIAAILPLGVPKFIVSTIAYSHLLPPERIAPDLMMILWAGGLYGLNPICRSVLSQACGAVVGAAKLVEKPSAEKPLIGMTSLGSSCLKYMRFLKPELEKRGYDVAIFHATGMGGRAYEAVAAQKGFVAVFDFCIQEVTNAESGSVVTSGPDRMENAERAGIPQIIAPGAVDMVDMPAWQNVPEQFRDRPYHAHNRLIASITVSPEQRRAVARVVAAKLERAAAPVAFILPTGGVQERDRNGEPLHEPEALGAFLDEMRGAVSGTITFEEVDAHINAPEFASRALAVFDRWVAEGIVVKGNVA.

The protein belongs to the UPF0261 family.

This chain is UPF0261 protein BRA1168/BS1330_II1159, found in Brucella suis biovar 1 (strain 1330).